The chain runs to 59 residues: uncharacterized protein (59 aa).

2 consecutive transmembrane segments (helical) span residues 1-21 (MNMY…YIFI) and 30-50 (GSWI…PYFY).

It localises to the cell membrane. This is an uncharacterized protein from Bacillus subtilis (strain 168).